A 206-amino-acid chain; its full sequence is Pyrrolidone-carboxylate peptidase (206 aa).

Residues glutamate 76, cysteine 139, and histidine 163 contribute to the active site.

It belongs to the peptidase C15 family. In terms of assembly, homotetramer.

Its subcellular location is the cytoplasm. It carries out the reaction Release of an N-terminal pyroglutamyl group from a polypeptide, the second amino acid generally not being Pro.. Its function is as follows. Removes 5-oxoproline from various penultimate amino acid residues except L-proline. This chain is Pyrrolidone-carboxylate peptidase (pcp), found in Pyrococcus horikoshii (strain ATCC 700860 / DSM 12428 / JCM 9974 / NBRC 100139 / OT-3).